The chain runs to 252 residues: Chitooligosaccharide deacetylase (252 aa).

2 residues coordinate Mg(2+): H61 and H125.

Belongs to the YdjC deacetylase family. ChbG subfamily. In terms of assembly, homodimer. It depends on Mg(2+) as a cofactor.

Its subcellular location is the cytoplasm. It catalyses the reaction N,N'-diacetylchitobiose + H2O = N-acetyl-beta-D-glucosaminyl-(1-&gt;4)-D-glucosamine + acetate. The enzyme catalyses diacetylchitobiose-6'-phosphate + H2O = N'-monoacetylchitobiose-6'-phosphate + acetate. It participates in glycan degradation; chitin degradation. Functionally, involved in the degradation of chitin. ChbG is essential for growth on the acetylated chitooligosaccharides chitobiose and chitotriose but is dispensable for growth on cellobiose and chitosan dimer, the deacetylated form of chitobiose. Deacetylation of chitobiose-6-P and chitotriose-6-P is necessary for both the activation of the chb promoter by the regulatory protein ChbR and the hydrolysis of phosphorylated beta-glucosides by the phospho-beta-glucosidase ChbF. Catalyzes the removal of only one acetyl group from chitobiose-6-P to yield monoacetylchitobiose-6-P, the inducer of ChbR and the substrate of ChbF. The protein is Chitooligosaccharide deacetylase of Escherichia coli O6:H1 (strain CFT073 / ATCC 700928 / UPEC).